The following is a 344-amino-acid chain: Tripartite motif-containing protein 44 (344 aa).

Disordered regions lie at residues 1–25 (MASG…EPDE) and 68–165 (TPPA…EFDP). Positions 75 to 92 (GAGKEEAEVKVEQEREIE) are enriched in basic and acidic residues. The segment covering 93-165 (SEAGEESESE…ETEAESEFDP (73 aa)) has biased composition (acidic residues). The B box-type zinc-finger motif lies at 174–215 (VAKRKCPDHGLDLSTYCQEDRQLICVLCPVIGAHQGHQLSTL). Residues Cys-179, His-182, Cys-201, and His-207 each coordinate Zn(2+). A coiled-coil region spans residues 290-325 (AHVTEILADIQSHMDRLMTQMAQAKEQLDTSNESAE). Residues 309-344 (QMAQAKEQLDTSNESAEPKAEGDEEGPSGASEEEDT) form a disordered region. Acidic residues predominate over residues 330 to 344 (GDEEGPSGASEEEDT). Phosphoserine occurs at positions 336 and 339.

In terms of assembly, interacts (via coiled coil) with TRIM17 (via coiled coil).

In terms of biological role, may play a role in the process of differentiation and maturation of neuronal cells. May regulate the activity of TRIM17. Is a negative regulator of PAX6 expression. This chain is Tripartite motif-containing protein 44 (TRIM44), found in Pongo abelii (Sumatran orangutan).